Consider the following 71-residue polypeptide: uncharacterized protein (71 aa).

This is an uncharacterized protein from Bacillus phage SPP1 (Bacteriophage SPP1).